The following is a 425-amino-acid chain: UPF0597 protein VFMJ11_0655 (425 aa).

The protein belongs to the UPF0597 family.

The protein is UPF0597 protein VFMJ11_0655 of Aliivibrio fischeri (strain MJ11) (Vibrio fischeri).